The following is a 127-amino-acid chain: Spore germination protein 1 (127 aa).

Positions 1-25 (MNIKNSLILIISTIFVLSMINGGLT) are cleaved as a signal peptide. N-linked (GlcNAc...) asparagine glycans are attached at residues Asn-54 and Asn-118.

Belongs to the Dictyostelium gerABC family.

It is found in the secreted. In Dictyostelium discoideum (Social amoeba), this protein is Spore germination protein 1 (gerA).